We begin with the raw amino-acid sequence, 78 residues long: Large ribosomal subunit protein bL28B (78 aa).

The tract at residues 1–29 is disordered; the sequence is MSAHCQVTGRKPGFGNTVSHSHRRSRRRW. Residues 20-29 show a composition bias toward basic residues; the sequence is HSHRRSRRRW.

The protein belongs to the bacterial ribosomal protein bL28 family.

In Mycobacterium bovis (strain ATCC BAA-935 / AF2122/97), this protein is Large ribosomal subunit protein bL28B (rpmB2).